The sequence spans 188 residues: Pyridoxal 5'-phosphate synthase subunit PdxT (188 aa).

Residue 46–48 coordinates L-glutamine; sequence GES. The Nucleophile role is filled by C78. Residues R106 and 132-133 contribute to the L-glutamine site; that span reads IR. Catalysis depends on charge relay system residues H169 and E171.

Belongs to the glutaminase PdxT/SNO family. As to quaternary structure, in the presence of PdxS, forms a dodecamer of heterodimers. Only shows activity in the heterodimer.

It carries out the reaction aldehydo-D-ribose 5-phosphate + D-glyceraldehyde 3-phosphate + L-glutamine = pyridoxal 5'-phosphate + L-glutamate + phosphate + 3 H2O + H(+). The enzyme catalyses L-glutamine + H2O = L-glutamate + NH4(+). Its pathway is cofactor biosynthesis; pyridoxal 5'-phosphate biosynthesis. In terms of biological role, catalyzes the hydrolysis of glutamine to glutamate and ammonia as part of the biosynthesis of pyridoxal 5'-phosphate. The resulting ammonia molecule is channeled to the active site of PdxS. The protein is Pyridoxal 5'-phosphate synthase subunit PdxT of Tropheryma whipplei (strain Twist) (Whipple's bacillus).